A 507-amino-acid chain; its full sequence is Pre-glycoprotein polyprotein GP complex (507 aa).

Gly2 carries N-myristoyl glycine; by host lipidation. The Extracellular segment spans residues 2–17 (GQVVTFLQSLPEVINE). Residues 18-33 (AINIALIAISIICILK) traverse the membrane as a helical segment. At 34–58 (GLVNFWKCGVVQLAIFLCLAGRKCD) the chain is on the cytoplasmic side. Cys57 contributes to the Zn(2+) binding site. Topologically, residues 59–445 (GLMIDRRHEL…QGKTPIALTD (387 aa)) are extracellular. 4 cysteine pairs are disulfide-bonded: Cys86-Cys247, Cys292-Cys305, Cys314-Cys323, and Cys377-Cys398. N-linked (GlcNAc...) asparagine; by host glycans are attached at residues Asn89, Asn111, Asn179, and Asn240. N-linked (GlcNAc...) asparagine; by host glycosylation is found at Asn378, Asn386, Asn403, and Asn408. Residues 446–466 (ICFWSLVFFTSTVFLQLVGIP) traverse the membrane as a helical segment. The Cytoplasmic portion of the chain corresponds to 467-507 (THRHLVGEGCPKPHRITSNSLCACGYYKIPKRPTRWVRKGK). Residues His468, His470, Cys476, His480, Cys488, and Cys490 each coordinate Zn(2+).

It belongs to the arenaviridae GPC protein family. In terms of assembly, interacts with glycoprotein G2. Part of the GP complex (GP-C) together with glycoprotein G1 and glycoprotein G2. The GP-complex interacts with protein Z, which interacts with ribonucleocapsid; these interactions may induce virion budding. Homotrimer; disulfide-linked. In pre-fusion state, G1 homotrimers bind G2 homotrimers via ionic interactions. Part of the GP complex (GP-C) together with glycoprotein G2 and the stable signal peptide. The GP-complex interacts with protein Z, which interacts with ribonucleocapsid; these interactions may induce virion budding. As to quaternary structure, homotrimer. Interacts with the stable signal peptide. In pre-fusion state, G2 homotrimers bind G1 homotrimers via ionic interactions. Part of the GP complex (GP-C) together with glycoprotein G1 and the stable signal peptide. Acidification in the endosome triggers rearrangements, which ultimately leads to a 6 helix bundle formed by the two heptad repeat domains (HR1 and HR2) in post-fusion state. The GP-complex interacts with protein Z, which interacts with ribonucleocapsid; these interactions may induce virion budding. Specific enzymatic cleavages in vivo yield mature proteins. GP-C polyprotein is cleaved in the endoplasmic reticulum by the host protease MBTPS1. Only cleaved glycoprotein is incorporated into virions. Post-translationally, the SSP remains stably associated with the GP complex following cleavage by signal peptidase and plays crucial roles in the trafficking of GP through the secretory pathway. In terms of processing, myristoylation is necessary for GP2-mediated fusion activity.

The protein localises to the virion membrane. The protein resides in the host endoplasmic reticulum membrane. It is found in the host Golgi apparatus membrane. Its subcellular location is the host cell membrane. Functions as a cleaved signal peptide that is retained as the third component of the GP complex (GP-C). Helps to stabilize the spike complex in its native conformation. The SSP is required for efficient glycoprotein expression, post-translational maturation cleavage of G1 and G2, glycoprotein transport to the cell surface plasma membrane, formation of infectious virus particles, and acid pH-dependent glycoprotein-mediated cell fusion. In terms of biological role, forms the virion spikes together with glycoprotein G2. The glycoprotein spike trimers are connected to the underlying matrix. Interacts with the host receptor leading to virus endocytosis. Its function is as follows. Forms the virion spikes together with glycoprotein G1. The glycoprotein spike trimers are connected to the underlying matrix. Class I viral fusion protein that directs fusion of viral and host endosomal membranes, leading to delivery of the nucleocapsid into the cytoplasm. Membrane fusion is mediated by irreversible conformational changes induced by acidification. The polypeptide is Pre-glycoprotein polyprotein GP complex (Allpahuayo mammarenavirus (isolate Rat/Peru/CLHP-2472/1997) (ALLV)).